We begin with the raw amino-acid sequence, 215 residues long: Cytochrome b6 (215 aa).

A helical transmembrane segment spans residues 32-52 (IFYCLGGITLTCFLVQVATGF). Residue C35 participates in heme c binding. Heme b-binding residues include H86 and H100. A run of 3 helical transmembrane segments spans residues 90-110 (ASMM…TGGF), 116-136 (LTWV…VTGY), and 186-206 (LHTF…FLMI). 2 residues coordinate heme b: H187 and H202.

This sequence belongs to the cytochrome b family. PetB subfamily. The 4 large subunits of the cytochrome b6-f complex are cytochrome b6, subunit IV (17 kDa polypeptide, PetD), cytochrome f and the Rieske protein, while the 4 small subunits are PetG, PetL, PetM and PetN. The complex functions as a dimer. Heme b serves as cofactor. Heme c is required as a cofactor.

Its subcellular location is the plastid. It is found in the chloroplast thylakoid membrane. Functionally, component of the cytochrome b6-f complex, which mediates electron transfer between photosystem II (PSII) and photosystem I (PSI), cyclic electron flow around PSI, and state transitions. The sequence is that of Cytochrome b6 from Hordeum vulgare (Barley).